We begin with the raw amino-acid sequence, 375 residues long: tRNA-specific 2-thiouridylase MnmA (375 aa).

Residues 17-24 (GMSGGVDS) and methionine 43 contribute to the ATP site. The segment at 103-105 (NPD) is interaction with target base in tRNA. Cysteine 108 acts as the Nucleophile in catalysis. A disulfide bond links cysteine 108 and cysteine 204. ATP is bound at residue glycine 132. The interval 154–156 (KDQ) is interaction with tRNA. The active-site Cysteine persulfide intermediate is cysteine 204. An interaction with tRNA region spans residues 316–317 (RY).

It belongs to the MnmA/TRMU family.

It is found in the cytoplasm. The enzyme catalyses S-sulfanyl-L-cysteinyl-[protein] + uridine(34) in tRNA + AH2 + ATP = 2-thiouridine(34) in tRNA + L-cysteinyl-[protein] + A + AMP + diphosphate + H(+). Its function is as follows. Catalyzes the 2-thiolation of uridine at the wobble position (U34) of tRNA, leading to the formation of s(2)U34. This Stutzerimonas stutzeri (strain A1501) (Pseudomonas stutzeri) protein is tRNA-specific 2-thiouridylase MnmA.